A 349-amino-acid chain; its full sequence is MIEFDNLTYLHGKPQGTGLLKANPEDFVVVEDLGFEPDGEGEHILVRILKNGCNTRFVADALAKFLKIHAREVSFAGQKDKHAVTEQWLCARVPGKEMPDLSAFQLEGCQVLEYARHKRKLRLGALKGNAFTLVLREVSNRDDVEQRLIDICVKGVPNYFGAQRFGIGGSNLQGALRWAQTNTPVRDRNKRSFWLSAARSALFNQIVAERLKKADVNQVVDGDALQLAGRGSWFVATTEELAELQRRVNDKELMITAALPGSGEWGTQREALAFEKAAVAAETELQALLVREKVEAARRAMLLYPQQLSWNWWDDVTVEIRFWLPAGSFATSVVRELINTTGDYAHIAE.

Phenylalanine 27 is a binding site for substrate. Aspartate 80 (nucleophile) is an active-site residue. Asparagine 129 provides a ligand contact to substrate. In terms of domain architecture, TRUD spans 155 to 303 (GVPNYFGAQR…VEAARRAMLL (149 aa)). Phenylalanine 329 is a substrate binding site.

The protein belongs to the pseudouridine synthase TruD family.

It carries out the reaction uridine(13) in tRNA = pseudouridine(13) in tRNA. Responsible for synthesis of pseudouridine from uracil-13 in transfer RNAs. This is tRNA pseudouridine synthase D from Escherichia coli (strain SE11).